A 346-amino-acid chain; its full sequence is Phosphoribosylformylglycinamidine cyclo-ligase (346 aa).

Belongs to the AIR synthase family.

The protein localises to the cytoplasm. The enzyme catalyses 2-formamido-N(1)-(5-O-phospho-beta-D-ribosyl)acetamidine + ATP = 5-amino-1-(5-phospho-beta-D-ribosyl)imidazole + ADP + phosphate + H(+). It participates in purine metabolism; IMP biosynthesis via de novo pathway; 5-amino-1-(5-phospho-D-ribosyl)imidazole from N(2)-formyl-N(1)-(5-phospho-D-ribosyl)glycinamide: step 2/2. In Geobacillus kaustophilus (strain HTA426), this protein is Phosphoribosylformylglycinamidine cyclo-ligase.